Here is a 227-residue protein sequence, read N- to C-terminus: Phosphatidylserine decarboxylase proenzyme (227 aa).

The active-site Schiff-base intermediate with substrate; via pyruvic acid is Ser-184. Pyruvic acid (Ser); by autocatalysis is present on Ser-184.

It belongs to the phosphatidylserine decarboxylase family. PSD-A subfamily. In terms of assembly, heterodimer of a large membrane-associated beta subunit and a small pyruvoyl-containing alpha subunit. Pyruvate is required as a cofactor. Post-translationally, is synthesized initially as an inactive proenzyme. Formation of the active enzyme involves a self-maturation process in which the active site pyruvoyl group is generated from an internal serine residue via an autocatalytic post-translational modification. Two non-identical subunits are generated from the proenzyme in this reaction, and the pyruvate is formed at the N-terminus of the alpha chain, which is derived from the carboxyl end of the proenzyme. The post-translation cleavage follows an unusual pathway, termed non-hydrolytic serinolysis, in which the side chain hydroxyl group of the serine supplies its oxygen atom to form the C-terminus of the beta chain, while the remainder of the serine residue undergoes an oxidative deamination to produce ammonia and the pyruvoyl prosthetic group on the alpha chain.

Its subcellular location is the cell membrane. It catalyses the reaction a 1,2-diacyl-sn-glycero-3-phospho-L-serine + H(+) = a 1,2-diacyl-sn-glycero-3-phosphoethanolamine + CO2. It functions in the pathway phospholipid metabolism; phosphatidylethanolamine biosynthesis; phosphatidylethanolamine from CDP-diacylglycerol: step 2/2. In terms of biological role, catalyzes the formation of phosphatidylethanolamine (PtdEtn) from phosphatidylserine (PtdSer). The polypeptide is Phosphatidylserine decarboxylase proenzyme (Ehrlichia ruminantium (strain Gardel)).